Consider the following 138-residue polypeptide: Large ribosomal subunit protein uL16 (138 aa).

Basic residues predominate over residues 1-19; that stretch reads MLIPRRVKHRKQHHPKRSG. Positions 1 to 24 are disordered; that stretch reads MLIPRRVKHRKQHHPKRSGAAKGG.

This sequence belongs to the universal ribosomal protein uL16 family. Part of the 50S ribosomal subunit.

Binds 23S rRNA and is also seen to make contacts with the A and possibly P site tRNAs. The polypeptide is Large ribosomal subunit protein uL16 (Micrococcus luteus (strain ATCC 4698 / DSM 20030 / JCM 1464 / CCM 169 / CCUG 5858 / IAM 1056 / NBRC 3333 / NCIMB 9278 / NCTC 2665 / VKM Ac-2230) (Micrococcus lysodeikticus)).